The chain runs to 46 residues: Esculentin-1A (46 aa).

An intrachain disulfide couples Cys-40 to Cys-46.

This sequence belongs to the frog skin active peptide (FSAP) family. Brevinin subfamily. In terms of tissue distribution, expressed by the skin glands.

It is found in the secreted. Functionally, shows antibacterial activity against representative Gram-negative and Gram-positive bacterial species, and hemolytic activity. The protein is Esculentin-1A of Pelophylax lessonae (Pool frog).